Here is a 171-residue protein sequence, read N- to C-terminus: Large ribosomal subunit protein bL17 (171 aa).

The segment covering K140–R152 has biased composition (basic and acidic residues). Residues K140–K171 are disordered. Residues K156–E165 show a composition bias toward polar residues.

It belongs to the bacterial ribosomal protein bL17 family. As to quaternary structure, part of the 50S ribosomal subunit. Contacts protein L32.

This chain is Large ribosomal subunit protein bL17, found in Leptospira interrogans serogroup Icterohaemorrhagiae serovar Lai (strain 56601).